A 707-amino-acid polypeptide reads, in one-letter code: MSSAEFSMDDFEDTFDSNATISTKDLFEGSDRLPLNQSINTTIQNLYLPNGGFAIGDQSQQQYYQAMPPLNQSDQFNLGRSNNLTPRTNQLQQLQQQQQQQQQPQQQQQQQTYGTQSPIHMSQTPSSPLSSPLPSPTPFSRQQSYNNNNSNNTSSSQNYNNNNININNNNNNNNTNNNNNNNNGNNSNGNNGNNNNNNNNNNNNNTNNNNNNNQQQQQQQQQQQQQQQQQQQQQQQGNPNLSSPQPILDTIYKLLSEQEQTLVQMIHEQSLLLNRLPPTLDENSLAPLKSLSQKQITLSGQMNTEMSALDATKKGMILEPTDLAKLFALKQDLQIQFKQLSLLHNEIQSILNPQHSAPKPNVALVLKSQPFPVVISKGKQLGENQLVVLVLTGARSNFHINGPVKATMICDSHPTNKNNPTTPLEMDSQPIYPATLTAHFPLKFLAGTRKCSVNLKFGVNIRDLDNVTTTVESDASNPFVVITNECQWEGSAGVLLKKDAFDGQLEITWAQFINTLQRHFLIATKQDPVRPKRPLSSYDLKYIQTHFFGNRSIIHQQDFDKFWVWFGKSMQTLRYQRHISTLWQEGIIYGYMGRQEVNDALQNQDPGTFIIRFSERNPGQFGIAYIGVEMPARIKHYLVQPNDTAAAKKTFPDFLSEHSQFVNLLQWTKDTNGAPRFLKLHKDTALGSFAPKRTAPVPVGGYEPLNS.

Residues 70-89 are compositionally biased toward polar residues; the sequence is LNQSDQFNLGRSNNLTPRTN. Positions 70–246 are disordered; the sequence is LNQSDQFNLG…GNPNLSSPQP (177 aa). Positions 90-111 are enriched in low complexity; that stretch reads QLQQLQQQQQQQQQPQQQQQQQ. The span at 112-121 shows a compositional bias: polar residues; the sequence is TYGTQSPIHM. Residues 142 to 238 show a composition bias toward low complexity; that stretch reads QQSYNNNNSN…QQQQQQQQGN (97 aa). The stretch at 242–356 forms a coiled coil; it reads SSPQPILDTI…IQSILNPQHS (115 aa). A DNA-binding region spans residues 443 to 487; it reads KFLAGTRKCSVNLKFGVNIRDLDNVTTTVESDASNPFVVITNECQ. Residues 583–686 form the SH2 domain; sequence WQEGIIYGYM…FLKLHKDTAL (104 aa). Phosphotyrosine is present on Tyr702.

This sequence belongs to the transcription factor STAT family. Monomer, in the absence of tyrosine phosphorylation. Homodimer, or heterodimer with another family member, when tyrosine phosphorylated. Tyrosine phosphorylated in response to cAMP. Not tyrosine phosphorylated in growing cells. Tyrosine phosphorylation is first detected at the tight mound stage, continues throughout the slug stage and early culmination, and starts to decrease at mid-culmination. Barely detectable in fruiting bodies.

The protein resides in the cytoplasm. Its subcellular location is the nucleus. Its function is as follows. Transcription factor that binds to 5'-TTGAATTGA-3' elements in the promoter region of target genes. Functions as a repressor of the ecmB gene. Regulates the differentiation of prestalk cells during development. This chain is Signal transducer and activator of transcription A (dstA), found in Dictyostelium discoideum (Social amoeba).